We begin with the raw amino-acid sequence, 86 residues long: uncharacterized protein (86 aa).

This is an uncharacterized protein from Sus scrofa (Pig).